We begin with the raw amino-acid sequence, 155 residues long: SsrA-binding protein (155 aa).

Belongs to the SmpB family.

It localises to the cytoplasm. In terms of biological role, required for rescue of stalled ribosomes mediated by trans-translation. Binds to transfer-messenger RNA (tmRNA), required for stable association of tmRNA with ribosomes. tmRNA and SmpB together mimic tRNA shape, replacing the anticodon stem-loop with SmpB. tmRNA is encoded by the ssrA gene; the 2 termini fold to resemble tRNA(Ala) and it encodes a 'tag peptide', a short internal open reading frame. During trans-translation Ala-aminoacylated tmRNA acts like a tRNA, entering the A-site of stalled ribosomes, displacing the stalled mRNA. The ribosome then switches to translate the ORF on the tmRNA; the nascent peptide is terminated with the 'tag peptide' encoded by the tmRNA and targeted for degradation. The ribosome is freed to recommence translation, which seems to be the essential function of trans-translation. The sequence is that of SsrA-binding protein from Bacillus cereus (strain B4264).